Here is a 194-residue protein sequence, read N- to C-terminus: dTTP/UTP pyrophosphatase (194 aa).

D69 (proton acceptor) is an active-site residue.

It belongs to the Maf family. YhdE subfamily. Requires a divalent metal cation as cofactor.

The protein resides in the cytoplasm. It catalyses the reaction dTTP + H2O = dTMP + diphosphate + H(+). It carries out the reaction UTP + H2O = UMP + diphosphate + H(+). Its function is as follows. Nucleoside triphosphate pyrophosphatase that hydrolyzes dTTP and UTP. May have a dual role in cell division arrest and in preventing the incorporation of modified nucleotides into cellular nucleic acids. This chain is dTTP/UTP pyrophosphatase, found in Symbiobacterium thermophilum (strain DSM 24528 / JCM 14929 / IAM 14863 / T).